Consider the following 207-residue polypeptide: High frequency lysogenization protein HflD homolog (207 aa).

Belongs to the HflD family.

The protein resides in the cytoplasm. Its subcellular location is the cell inner membrane. This is High frequency lysogenization protein HflD homolog from Tolumonas auensis (strain DSM 9187 / NBRC 110442 / TA 4).